We begin with the raw amino-acid sequence, 175 residues long: Large ribosomal subunit protein uL10 (175 aa).

Belongs to the universal ribosomal protein uL10 family. In terms of assembly, part of the ribosomal stalk of the 50S ribosomal subunit. The N-terminus interacts with L11 and the large rRNA to form the base of the stalk. The C-terminus forms an elongated spine to which L12 dimers bind in a sequential fashion forming a multimeric L10(L12)X complex.

In terms of biological role, forms part of the ribosomal stalk, playing a central role in the interaction of the ribosome with GTP-bound translation factors. The protein is Large ribosomal subunit protein uL10 of Psychrobacter sp. (strain PRwf-1).